We begin with the raw amino-acid sequence, 150 residues long: Protein Smg homolog (150 aa).

It belongs to the Smg family.

This is Protein Smg homolog from Methylibium petroleiphilum (strain ATCC BAA-1232 / LMG 22953 / PM1).